We begin with the raw amino-acid sequence, 301 residues long: Rhodopsin (301 aa).

Residues 1 to 18 (LHMIHLHWYQYPPMNPIM) lie on the Extracellular side of the membrane. The helical transmembrane segment at 19-43 (YPLLLVFMLITGILCLAGNFVTIWV) threads the bilayer. The Cytoplasmic portion of the chain corresponds to 44–55 (FMNTKSLRTPAN). The chain crosses the membrane as a helical span at residues 56-78 (LLVVNLAMSDFLMMFTMFPPMMI). At 79 to 92 (TCYYHTWTLGATFC) the chain is on the extracellular side. An intrachain disulfide couples cysteine 92 to cysteine 169. A helical transmembrane segment spans residues 93–115 (QVYAFLGNLCGCASIWTMVFITF). Residues 116-118 (DRY) carry the 'Ionic lock' involved in activated form stabilization motif. Over 116–134 (DRYNVIVKGVAGEPLSTKK) the chain is Cytoplasmic. Residues 135–155 (ATLWILTIWILSTTWCVAPFF) form a helical membrane-spanning segment. The Extracellular segment spans residues 156-182 (GWNRYVPEGNLTGCGTDYLSQDILSRS). Asparagine 165 is a glycosylation site (N-linked (GlcNAc...) asparagine). A helical transmembrane segment spans residues 183 to 204 (YLYIYSTWVYFLPLAITIYCYV). Residues 205 to 245 (VIIKAVAAHEKGMRDQAKKMGIKSLRNEEAQKTSAECRLAK) lie on the Cytoplasmic side of the membrane. Residues 246-267 (IAMTTVALWFIAWTPYLLINWV) traverse the membrane as a helical segment. The Extracellular portion of the chain corresponds to 268–278 (GMFARSYLSPV). A helical membrane pass occupies residues 279–300 (YTIWGYVFAKANAVYNPIVYAI). Residue lysine 288 is modified to N6-(retinylidene)lysine.

The protein belongs to the G-protein coupled receptor 1 family. Opsin subfamily. Homodimer. Interacts with GNAQ. In terms of processing, contains one covalently linked retinal chromophore.

It is found in the cell projection. Its subcellular location is the rhabdomere membrane. Photoreceptor required for image-forming vision at low light intensity. Can use both retinal and 3-dehydroretinal as visual pigment. Light-induced isomerization of 11-cis to all-trans retinal triggers a conformational change that activates signaling via G-proteins. Signaling via GNAQ probably mediates the activation of phospholipase C. The protein is Rhodopsin (RHO) of Orconectes australis (Southern cave crayfish).